Consider the following 253-residue polypeptide: Sulfate transporter CysZ (253 aa).

Transmembrane regions (helical) follow at residues 31–51 (FVIL…WWLF), 75–95 (LLWP…FSTI), 151–171 (IVLL…PVLW), and 222–242 (IPLL…AMWV).

This sequence belongs to the CysZ family.

The protein localises to the cell inner membrane. In terms of biological role, high affinity, high specificity proton-dependent sulfate transporter, which mediates sulfate uptake. Provides the sulfur source for the cysteine synthesis pathway. In Shigella flexneri serotype 5b (strain 8401), this protein is Sulfate transporter CysZ.